We begin with the raw amino-acid sequence, 326 residues long: Glyoxalase I (326 aa).

2 consecutive VOC domains span residues 22–167 and 182–322; these read LLNH…LITY and KFNH…VVPH. His-25 is a binding site for Zn(2+). A substrate-binding site is contributed by Arg-29. Glu-89 is a Zn(2+) binding site. Substrate is bound by residues Asn-93, Arg-113, His-117, and 147–148; that span reads RQ. Position 117 (His-117) interacts with Zn(2+). Position 163 (Glu-163) interacts with Zn(2+). Catalysis depends on proton donor/acceptor residues Glu-163 and Glu-318.

It belongs to the glyoxalase I family. Monomer. It depends on Zn(2+) as a cofactor.

It carries out the reaction (R)-S-lactoylglutathione = methylglyoxal + glutathione. It functions in the pathway secondary metabolite metabolism; methylglyoxal degradation; (R)-lactate from methylglyoxal: step 1/2. Functionally, catalyzes the conversion of hemimercaptal, formed from methylglyoxal and glutathione, to S-lactoylglutathione. Can use gamma-glutamylcysteine as a substrate. This is Glyoxalase I from Saccharomyces cerevisiae (strain ATCC 204508 / S288c) (Baker's yeast).